A 174-amino-acid polypeptide reads, in one-letter code: Ribosome maturation factor RimM (174 aa).

The PRC barrel domain occupies 96 to 169 (KDTFFICDLI…KMVVDLPQGL (74 aa)).

This sequence belongs to the RimM family. Binds ribosomal protein uS19.

The protein localises to the cytoplasm. Its function is as follows. An accessory protein needed during the final step in the assembly of 30S ribosomal subunit, possibly for assembly of the head region. Essential for efficient processing of 16S rRNA. May be needed both before and after RbfA during the maturation of 16S rRNA. It has affinity for free ribosomal 30S subunits but not for 70S ribosomes. This is Ribosome maturation factor RimM from Acetivibrio thermocellus (strain ATCC 27405 / DSM 1237 / JCM 9322 / NBRC 103400 / NCIMB 10682 / NRRL B-4536 / VPI 7372) (Clostridium thermocellum).